The sequence spans 490 residues: Chromosomal replication initiator protein DnaA (490 aa).

The interval 1-75 is domain I, interacts with DnaA modulators; sequence MAVSSDAEQK…SELWKQEDAD (75 aa). Positions 75-145 are domain II; sequence DLLKIEIVVR…SEFRHNVLGS (71 aa). The domain III, AAA+ region stretch occupies residues 146–368; that stretch reads PLDPRYTFGS…GAFNQLLFRQ (223 aa). 4 residues coordinate ATP: glycine 192, glycine 194, lysine 195, and threonine 196. The tract at residues 369–490 is domain IV, binds dsDNA; sequence SFEPQITIDR…LLRRLINDQA (122 aa).

It belongs to the DnaA family. Oligomerizes as a right-handed, spiral filament on DNA at oriC.

Its subcellular location is the cytoplasm. Its function is as follows. Plays an essential role in the initiation and regulation of chromosomal replication. ATP-DnaA binds to the origin of replication (oriC) to initiate formation of the DNA replication initiation complex once per cell cycle. Binds the DnaA box (a 9 base pair repeat at the origin) and separates the double-stranded (ds)DNA. Forms a right-handed helical filament on oriC DNA; dsDNA binds to the exterior of the filament while single-stranded (ss)DNA is stabiized in the filament's interior. The ATP-DnaA-oriC complex binds and stabilizes one strand of the AT-rich DNA unwinding element (DUE), permitting loading of DNA polymerase. After initiation quickly degrades to an ADP-DnaA complex that is not apt for DNA replication. Binds acidic phospholipids. The protein is Chromosomal replication initiator protein DnaA of Mesorhizobium japonicum (strain LMG 29417 / CECT 9101 / MAFF 303099) (Mesorhizobium loti (strain MAFF 303099)).